Reading from the N-terminus, the 485-residue chain is NADH-quinone oxidoreductase subunit N (485 aa).

The next 14 helical transmembrane spans lie at 8-28 (LIAL…MLSI), 35-55 (FLNA…LWFV), 71-91 (GFAM…CTFA), 105-125 (FYLL…ANHL), 127-147 (SLFL…GYAF), 159-179 (YTIL…LVYA), 203-223 (LLAG…LVPF), 235-255 (PAPV…GVVM), 271-291 (VVLA…ALSQ), 297-317 (LLGY…IALQ), 326-346 (VGVY…VVSL), 373-393 (AAVM…LGFI), 408-430 (WWLV…RVAV), and 455-475 (IVVL…QPLI).

The protein belongs to the complex I subunit 2 family. As to quaternary structure, NDH-1 is composed of 13 different subunits. Subunits NuoA, H, J, K, L, M, N constitute the membrane sector of the complex.

It localises to the cell inner membrane. It catalyses the reaction a quinone + NADH + 5 H(+)(in) = a quinol + NAD(+) + 4 H(+)(out). Its function is as follows. NDH-1 shuttles electrons from NADH, via FMN and iron-sulfur (Fe-S) centers, to quinones in the respiratory chain. The immediate electron acceptor for the enzyme in this species is believed to be ubiquinone. Couples the redox reaction to proton translocation (for every two electrons transferred, four hydrogen ions are translocated across the cytoplasmic membrane), and thus conserves the redox energy in a proton gradient. The sequence is that of NADH-quinone oxidoreductase subunit N from Shigella dysenteriae serotype 1 (strain Sd197).